A 366-amino-acid polypeptide reads, in one-letter code: tRNA/tmRNA (uracil-C(5))-methyltransferase (366 aa).

Positions 190, 218, 223, 239, and 299 each coordinate S-adenosyl-L-methionine. The active-site Nucleophile is the Cys-324. Glu-358 serves as the catalytic Proton acceptor.

Belongs to the class I-like SAM-binding methyltransferase superfamily. RNA M5U methyltransferase family. TrmA subfamily.

The enzyme catalyses uridine(54) in tRNA + S-adenosyl-L-methionine = 5-methyluridine(54) in tRNA + S-adenosyl-L-homocysteine + H(+). It catalyses the reaction uridine(341) in tmRNA + S-adenosyl-L-methionine = 5-methyluridine(341) in tmRNA + S-adenosyl-L-homocysteine + H(+). Functionally, dual-specificity methyltransferase that catalyzes the formation of 5-methyluridine at position 54 (m5U54) in all tRNAs, and that of position 341 (m5U341) in tmRNA (transfer-mRNA). The chain is tRNA/tmRNA (uracil-C(5))-methyltransferase from Salmonella paratyphi A (strain ATCC 9150 / SARB42).